A 529-amino-acid polypeptide reads, in one-letter code: Putative amidohydrolase YtcJ (529 aa).

Belongs to the metallo-dependent hydrolases superfamily.

The sequence is that of Putative amidohydrolase YtcJ (ytcJ) from Bacillus subtilis (strain 168).